Reading from the N-terminus, the 173-residue chain is Small ribosomal subunit protein uS5 (173 aa).

The region spanning 17–80 is the S5 DRBM domain; the sequence is WQERVIQIRR…ADGKKQLIEV (64 aa).

This sequence belongs to the universal ribosomal protein uS5 family. As to quaternary structure, part of the 30S ribosomal subunit. Contacts proteins S4 and S8.

Functionally, with S4 and S12 plays an important role in translational accuracy. Located at the back of the 30S subunit body where it stabilizes the conformation of the head with respect to the body. The sequence is that of Small ribosomal subunit protein uS5 from Synechocystis sp. (strain ATCC 27184 / PCC 6803 / Kazusa).